We begin with the raw amino-acid sequence, 233 residues long: Phosphoribosylformylglycinamidine synthase subunit PurQ (233 aa).

A Glutamine amidotransferase type-1 domain is found at 3–233 (SAILVFPGIN…GLVEHLAKAA (231 aa)). Cys-87 (nucleophile) is an active-site residue. Catalysis depends on residues His-204 and Glu-206.

In terms of assembly, part of the FGAM synthase complex composed of 1 PurL, 1 PurQ and 2 PurS subunits.

The protein localises to the cytoplasm. The catalysed reaction is N(2)-formyl-N(1)-(5-phospho-beta-D-ribosyl)glycinamide + L-glutamine + ATP + H2O = 2-formamido-N(1)-(5-O-phospho-beta-D-ribosyl)acetamidine + L-glutamate + ADP + phosphate + H(+). The enzyme catalyses L-glutamine + H2O = L-glutamate + NH4(+). It participates in purine metabolism; IMP biosynthesis via de novo pathway; 5-amino-1-(5-phospho-D-ribosyl)imidazole from N(2)-formyl-N(1)-(5-phospho-D-ribosyl)glycinamide: step 1/2. Part of the phosphoribosylformylglycinamidine synthase complex involved in the purines biosynthetic pathway. Catalyzes the ATP-dependent conversion of formylglycinamide ribonucleotide (FGAR) and glutamine to yield formylglycinamidine ribonucleotide (FGAM) and glutamate. The FGAM synthase complex is composed of three subunits. PurQ produces an ammonia molecule by converting glutamine to glutamate. PurL transfers the ammonia molecule to FGAR to form FGAM in an ATP-dependent manner. PurS interacts with PurQ and PurL and is thought to assist in the transfer of the ammonia molecule from PurQ to PurL. In Rhodopseudomonas palustris (strain BisB18), this protein is Phosphoribosylformylglycinamidine synthase subunit PurQ.